The sequence spans 400 residues: S-adenosylmethionine synthase (400 aa).

H17 is an ATP binding site. Residue D19 coordinates Mg(2+). A K(+)-binding site is contributed by E45. E58 and Q101 together coordinate L-methionine. A flexible loop region spans residues 101–111 (QSPDIAMGVDQ). ATP is bound by residues 177 to 179 (DGK), 244 to 245 (RF), D253, 259 to 260 (RK), A276, and K280. D253 provides a ligand contact to L-methionine. K284 contributes to the L-methionine binding site.

Belongs to the AdoMet synthase family. In terms of assembly, homotetramer; dimer of dimers. The cofactor is Mg(2+). It depends on K(+) as a cofactor.

Its subcellular location is the cytoplasm. It catalyses the reaction L-methionine + ATP + H2O = S-adenosyl-L-methionine + phosphate + diphosphate. It participates in amino-acid biosynthesis; S-adenosyl-L-methionine biosynthesis; S-adenosyl-L-methionine from L-methionine: step 1/1. In terms of biological role, catalyzes the formation of S-adenosylmethionine (AdoMet) from methionine and ATP. The overall synthetic reaction is composed of two sequential steps, AdoMet formation and the subsequent tripolyphosphate hydrolysis which occurs prior to release of AdoMet from the enzyme. This is S-adenosylmethionine synthase from Bacillus licheniformis (strain ATCC 14580 / DSM 13 / JCM 2505 / CCUG 7422 / NBRC 12200 / NCIMB 9375 / NCTC 10341 / NRRL NRS-1264 / Gibson 46).